A 288-amino-acid chain; its full sequence is Aminoglycoside N(3)-acetyltransferase VII (288 aa).

This sequence belongs to the antibiotic N-acetyltransferase family.

It catalyses the reaction a 2-deoxystreptamine antibiotic + acetyl-CoA = an N(3)-acetyl-2-deoxystreptamine antibiotic + CoA + H(+). Resistance to paromomycin. This chain is Aminoglycoside N(3)-acetyltransferase VII (aacC7), found in Streptomyces paromomycinus (Streptomyces rimosus subsp. paromomycinus).